The sequence spans 481 residues: Keratin, type II cuticular Hb1 (481 aa).

Residues 1–106 (MTCGSGFCGR…PNAQCVKHEE (106 aa)) are head. The IF rod domain occupies 106–417 (EKEQIKCLNS…RLLEGEEQRL (312 aa)). The interval 107–141 (KEQIKCLNSKFAAFIDKVRFLEQQNKLLETKWQFY) is coil 1A. The linker 1 stretch occupies residues 142–151 (QNRKCCESNM). The tract at residues 152–252 (EPLFEGYIEA…YDEETRILHS (101 aa)) is coil 1B. Residue Lys-212 forms a Glycyl lysine isopeptide (Lys-Gly) (interchain with G-Cter in SUMO1) linkage. Residues 253 to 269 (HISDTSIVVKMDNSRDL) form a linker 12 region. Positions 270 to 413 (NMDCVVAEIK…TTYRRLLEGE (144 aa)) are coil 2. Residues 414–481 (EQRLCEGVGA…GSAVSCGRKC (68 aa)) form a tail region.

Belongs to the intermediate filament family. As to quaternary structure, heterotetramer of two type I and two type II keratins. In terms of tissue distribution, expressed in dorsal skin.

This is Keratin, type II cuticular Hb1 from Mus musculus (Mouse).